The chain runs to 103 residues: ATP synthase subunit c (103 aa).

The next 3 helical transmembrane spans lie at 3–23 (FLALLCLGMVGFAFGAEVSGL), 30–50 (SIAGAVIGLGIAALGGAIGMG), and 74–94 (MFIALALIEAQVIYTLVLALI).

It belongs to the ATPase C chain family. In terms of assembly, F-type ATPases have 2 components, F(1) - the catalytic core - and F(0) - the membrane proton channel. F(1) has five subunits: alpha(3), beta(3), gamma(1), delta(1), epsilon(1). F(0) has three main subunits: a(1), b(2) and c(10-14). The alpha and beta chains form an alternating ring which encloses part of the gamma chain. F(1) is attached to F(0) by a central stalk formed by the gamma and epsilon chains, while a peripheral stalk is formed by the delta and b chains.

It is found in the cell inner membrane. Functionally, f(1)F(0) ATP synthase produces ATP from ADP in the presence of a proton or sodium gradient. F-type ATPases consist of two structural domains, F(1) containing the extramembraneous catalytic core and F(0) containing the membrane proton channel, linked together by a central stalk and a peripheral stalk. During catalysis, ATP synthesis in the catalytic domain of F(1) is coupled via a rotary mechanism of the central stalk subunits to proton translocation. In terms of biological role, key component of the F(0) channel; it plays a direct role in translocation across the membrane. A homomeric c-ring of between 10-14 subunits forms the central stalk rotor element with the F(1) delta and epsilon subunits. The polypeptide is ATP synthase subunit c (Helicobacter hepaticus (strain ATCC 51449 / 3B1)).